We begin with the raw amino-acid sequence, 444 residues long: IMP-specific 5'-nucleotidase 1 (444 aa).

The ATP site is built by K132 and H150. D170 functions as the Nucleophile in the catalytic mechanism. IMP-binding residues include D170, D172, D178, T204, S207, S308, D363, and K371. D170 and D172 together coordinate Mg(2+). D172 (proton donor) is an active-site residue. D394 serves as a coordination point for Mg(2+).

This sequence belongs to the ISN1 family. In terms of assembly, homotetramer. The cofactor is Mg(2+).

It localises to the cytoplasm. The catalysed reaction is IMP + H2O = inosine + phosphate. Its activity is regulated as follows. At physiological pH, allosterically activated by ATP. ATP binding is a prerequisite to magnesium and substrate binding. ATP binds to 2 of the subunits in the homotetramer inducing a closure of these 2 subunits and the release of the C-terminal loop, thereby activating the enzyme. In this conformation, the enzyme can bind IMP and magnesium which ultimately leads to the release of ATP. At pH 5, ATP does not have an allosteric role and is dispensable for magnesium and substrate binding. Inhibited by phosphocholine and D-myo-inositol-4-phosphate. Functionally, specifically, catalyzes the dephosphorylation of inosine monophosphate (IMP) into inosine. By dephosphorylating IMP, plays a role in the purine salvage pathway. Does not have phosphotransferase activity with IMP as phosphate donor and adenosine as phosphate acceptor. This chain is IMP-specific 5'-nucleotidase 1, found in Plasmodium falciparum (isolate 3D7).